A 196-amino-acid polypeptide reads, in one-letter code: Adenosylcobinamide-phosphate guanylyltransferase (196 aa).

As to quaternary structure, homodimer.

It carries out the reaction adenosylcob(III)inamide phosphate + GTP + H(+) = adenosylcob(III)inamide-GDP + diphosphate. It participates in cofactor biosynthesis; adenosylcobalamin biosynthesis. Guanylyltransferase that catalyzes the synthesis of adenosylcobinamide-GDP (AdoCbi-GDP) from adenosylcobinamide-phosphate (AdoCbi-P) and GTP. Is involved in adenosylcobalamin biosynthesis. Binds one GTP per dimer. Cannot use other NTPs or GDP. Does not display AdoCbi kinase activity. Is also able to catalyze the condensation of 2-phospho-L-lactate (LP) with GTP in vitro to form PPi and (2S)-lactyl-2-diphospho-5'-guanosine (LPPG), but is much less efficient than CofC, the presumed enzyme catalyzing this reaction in vivo. This is Adenosylcobinamide-phosphate guanylyltransferase (cobY) from Methanocaldococcus jannaschii (strain ATCC 43067 / DSM 2661 / JAL-1 / JCM 10045 / NBRC 100440) (Methanococcus jannaschii).